We begin with the raw amino-acid sequence, 275 residues long: Large ribosomal subunit protein uL2 (275 aa).

The segment covering T36 to I49 has biased composition (polar residues). Disordered regions lie at residues T36–K59 and A224–R275. The segment covering T50–K59 has biased composition (basic residues).

It belongs to the universal ribosomal protein uL2 family. In terms of assembly, part of the 50S ribosomal subunit. Forms a bridge to the 30S subunit in the 70S ribosome.

One of the primary rRNA binding proteins. Required for association of the 30S and 50S subunits to form the 70S ribosome, for tRNA binding and peptide bond formation. It has been suggested to have peptidyltransferase activity; this is somewhat controversial. Makes several contacts with the 16S rRNA in the 70S ribosome. The polypeptide is Large ribosomal subunit protein uL2 (Burkholderia vietnamiensis (strain G4 / LMG 22486) (Burkholderia cepacia (strain R1808))).